We begin with the raw amino-acid sequence, 209 residues long: MLMIHSVANGLNHFCTWVMRLAYLNVLWILFSLAGLVVFGLMPATAAMFTVAREWAKGNTDAPVFSVFFRTFKKEWRASQILGLIVVTAALFLFADMRIAAQMDQPVLVNVFVSISLIFAFVVLYVFPVFSHFDVKIREVLSISFFIAFSRPAVTLLMAAGAVGVLCLVLFHVTFLLFFSGSLLSLILTKLSFKAFRSMDQRQEKEKAA.

The next 4 membrane-spanning stretches (helical) occupy residues 21-41 (LAYL…VFGL), 81-101 (ILGL…RIAA), 107-127 (VLVN…LYVF), and 159-179 (AAGA…LLFF).

The protein localises to the cell membrane. This is an uncharacterized protein from Bacillus subtilis (strain 168).